The sequence spans 187 residues: uncharacterized protein (187 aa).

A helical transmembrane segment spans residues 8-28; that stretch reads FFILLAINFILAAGFVALVLL.

It is found in the membrane. This is an uncharacterized protein from Bacillus subtilis (strain 168).